The chain runs to 378 residues: Ribosomal RNA large subunit methyltransferase G (378 aa).

The protein belongs to the methyltransferase superfamily. RlmG family.

Its subcellular location is the cytoplasm. The enzyme catalyses guanosine(1835) in 23S rRNA + S-adenosyl-L-methionine = N(2)-methylguanosine(1835) in 23S rRNA + S-adenosyl-L-homocysteine + H(+). Its function is as follows. Specifically methylates the guanine in position 1835 (m2G1835) of 23S rRNA. The protein is Ribosomal RNA large subunit methyltransferase G of Citrobacter koseri (strain ATCC BAA-895 / CDC 4225-83 / SGSC4696).